A 76-amino-acid chain; its full sequence is Conotoxin Cal5a L1 (76 aa).

The N-terminal stretch at Met-1–Ala-22 is a signal peptide. Positions Ser-23 to Gln-42 are excised as a propeptide. Pro-50 bears the 4-hydroxyproline mark. Residue Pro-58 is modified to 4-hydroxyproline; in form cal5a, and form cal5b. Pro-62 is modified (4-hydroxyproline; in form cal5a, form cal5b, and form cal5c). The residue at position 64 (Pro-64) is a 4-hydroxyproline; in form cal5a, form cal5b, form cal5c, and form cal5d.

Contains 2 disulfide bonds that can be either 'C1-C3, C2-C4' or 'C1-C4, C2-C3', since these disulfide connectivities have been observed for conotoxins with cysteine framework V (for examples, see AC P0DQQ7 and AC P81755). In terms of processing, five different peptides have been described after total venom examination by HPLC-MS. Cal5a is the longest. Cal5b-Cal5e are identical in length but are differentially hydroxylated. It is possible that hydroxylation and proteolysis at position 53 are incomplete in some of these peptides. As to expression, expressed by the venom duct.

The protein localises to the secreted. Its function is as follows. Probable neurotoxin with unknown target. Possibly targets ion channels. In Californiconus californicus (California cone), this protein is Conotoxin Cal5a L1.